The primary structure comprises 390 residues: 8-amino-7-oxononanoate synthase (390 aa).

Position 19 (Arg19) interacts with substrate. Residue 106–107 coordinates pyridoxal 5'-phosphate; the sequence is GY. His131 is a substrate binding site. Pyridoxal 5'-phosphate contacts are provided by Ser176, His204, and Thr233. N6-(pyridoxal phosphate)lysine is present on Lys236. Thr350 lines the substrate pocket.

The protein belongs to the class-II pyridoxal-phosphate-dependent aminotransferase family. BioF subfamily. Homodimer. Pyridoxal 5'-phosphate serves as cofactor.

It catalyses the reaction 6-carboxyhexanoyl-[ACP] + L-alanine + H(+) = (8S)-8-amino-7-oxononanoate + holo-[ACP] + CO2. It functions in the pathway cofactor biosynthesis; biotin biosynthesis. Catalyzes the decarboxylative condensation of pimeloyl-[acyl-carrier protein] and L-alanine to produce 8-amino-7-oxononanoate (AON), [acyl-carrier protein], and carbon dioxide. The sequence is that of 8-amino-7-oxononanoate synthase from Pseudomonas putida (strain ATCC 700007 / DSM 6899 / JCM 31910 / BCRC 17059 / LMG 24140 / F1).